We begin with the raw amino-acid sequence, 198 residues long: 7-methyl-GTP pyrophosphatase (198 aa).

D75 (proton acceptor) is an active-site residue.

It belongs to the Maf family. YceF subfamily. The cofactor is a divalent metal cation.

The protein resides in the cytoplasm. It carries out the reaction N(7)-methyl-GTP + H2O = N(7)-methyl-GMP + diphosphate + H(+). Its function is as follows. Nucleoside triphosphate pyrophosphatase that hydrolyzes 7-methyl-GTP (m(7)GTP). May have a dual role in cell division arrest and in preventing the incorporation of modified nucleotides into cellular nucleic acids. This Bartonella henselae (strain ATCC 49882 / DSM 28221 / CCUG 30454 / Houston 1) (Rochalimaea henselae) protein is 7-methyl-GTP pyrophosphatase.